A 304-amino-acid polypeptide reads, in one-letter code: MKEGPISSSSNFNHVPVMGKEIIQSLKELPSELTKQGLIIDATIGGGGHSAQILENFPGIKIIGLDQDPMAREAASKKLIKFGTRIKIISTNFADFSLDEQAICVLADLGVSSHQLDEPSRGFSFRLNGPIDMRMNPKEGSSAAELIETLSEQNLADLIYELGEEKRSRRIARKIKNDLAENGPYSGTQDLSYAIAGCFPPKQRYGRIHPSTRTFQALRIAVNNELGSLESLLLKAPNWLLENGLFMVMSFHSLEDRRVKSSFKTDNRLKVLSKKPIRASPEEIELNPRSKSAKLRISAKKFLT.

S-adenosyl-L-methionine is bound by residues 47-49 (GGH), Asp66, Phe93, Asp108, and Gln115.

This sequence belongs to the methyltransferase superfamily. RsmH family.

It localises to the cytoplasm. The enzyme catalyses cytidine(1402) in 16S rRNA + S-adenosyl-L-methionine = N(4)-methylcytidine(1402) in 16S rRNA + S-adenosyl-L-homocysteine + H(+). Its function is as follows. Specifically methylates the N4 position of cytidine in position 1402 (C1402) of 16S rRNA. This is Ribosomal RNA small subunit methyltransferase H from Prochlorococcus marinus (strain NATL1A).